Consider the following 277-residue polypeptide: Zaragozic acid A biosynthesis cluster protein 1 (277 aa).

It participates in secondary metabolite biosynthesis. In terms of biological role, part of the gene cluster that mediates the biosynthesis of squalestatin S1 (SQS1, also known as zaragozic acid A), a heavily oxidized fungal polyketide that offers potent cholesterol lowering activity by targeting squalene synthase (SS). SQS1 is composed of a 2,8-dioxobicyclic[3.2.1]octane-3,4,5-tricarboxyclic acid core that is connected to two lipophilic polyketide arms. These initial steps feature the priming of an unusual benzoic acid starter unit onto the highly reducing polyketide synthase clz14, followed by oxaloacetate extension and product release to generate a tricarboxylic acid containing product. The phenylalanine ammonia lyase (PAL) clz10 and the acyl-CoA ligase clz12 are involved in transforming phenylalanine into benzoyl-CoA. The citrate synthase-like protein clz17 is involved in connecting the C-alpha-carbons of the hexaketide chain and oxaloacetate to afford the tricarboxylic acid unit. The potential hydrolytic enzymes, clz11 and clz13, are in close proximity to pks2 and may participate in product release. On the other side, the tetraketide arm is synthesized by a the squalestatin tetraketide synthase clz2 and enzymatically esterified to the core in the last biosynthetic step, by the acetyltransferase clz6. The biosynthesis of the tetraketide must involve 3 rounds of chain extension. After the first and second rounds methyl-transfer occurs, and in all rounds of extension the ketoreductase and dehydratase are active. The enoyl reductase and C-MeT of clz2 are not active in the final round of extension. The acetyltransferase clz6 appears to have a broad substrate selectivity for its acyl CoA substrate, allowing the in vitro synthesis of novel squalestatins. The biosynthesis of SQS1 requires several oxidative steps likely performed by oxidoreductases clz3, clz15 and clz16. Finally, in support of the identification of the cluster as being responsible for SQS1 production, the cluster contains a gene encoding a putative squalene synthase (SS) clz20, suggesting a likely mechanism for self-resistance. The protein is Zaragozic acid A biosynthesis cluster protein 1 of Cochliobolus lunatus (Filamentous fungus).